The primary structure comprises 327 residues: Cyclic AMP-responsive element-binding protein 1 (327 aa).

Disordered regions lie at residues 1 to 27 and 94 to 113; these read MTMESGADNQQSGDAAVTEAENQQMTV and SEDSQESVDSVTDSQKRREI. A KID domain is found at 87 to 146; it reads QISTIAESEDSQESVDSVTDSQKRREILSRRPSYRKILNDLSSDAPGVPRIEEEKSEEET. A Phosphoserine; by CaMK1, CaMK2, CaMK4, PKB/AKT1 or PKB/AKT2, RPS6KA3, RPS6KA4, RPS6KA5 and SGK1 modification is found at Ser-119. Lys-122 is covalently cross-linked (Glycyl lysine isopeptide (Lys-Gly) (interchain with G-Cter in SUMO2)). The interval 126 to 151 is disordered; it reads DLSSDAPGVPRIEEEKSEEETSAPAI. At Ser-128 the chain carries Phosphoserine; by CaMK2. Ser-257 is subject to Phosphoserine; by HIPK2. One can recognise a bZIP domain in the interval 269-327; it reads ARKREVRLMKNREAARECRRKKKEYVKCLENRVAVLENQNKTLIEELKALKDLYCHKSD. Positions 270-295 are basic motif; the sequence is RKREVRLMKNREAARECRRKKKEYVK. Glycyl lysine isopeptide (Lys-Gly) (interchain with G-Cter in SUMO1) cross-links involve residues Lys-271 and Lys-290. The segment at 297–318 is leucine-zipper; sequence LENRVAVLENQNKTLIEELKAL.

The protein belongs to the bZIP family. In terms of assembly, interacts with PPRC1. Binds DNA as a dimer. This dimer is stabilized by magnesium ions. Interacts, through the bZIP domain, with the coactivators CRTC1/TORC1, CRTC2/TORC2 and CRTC3/TORC3. Interacts (phosphorylated form) with TOX3. When phosphorylated on Ser-119, binds CREBBP. Interacts with ARRB1. Binds to HIPK2. Interacts with SGK1. Interacts with CREBL2; regulates CREB1 phosphorylation, stability and transcriptional activity. Interacts with TSSK4; this interaction facilitates phosphorylation on Ser-119. Forms a complex with KMT2A and CREBBP. Interacts with TOX4; CREB1 is required for full induction of TOX4-dependent activity and the interaction is increased by cAMP and inhibited by insulin. Post-translationally, phosphorylation of Ser-119 allows CREBBP binding. Stimulated by phosphorylation. Phosphorylated Ser-128 can be detected in the suprachiasmatic nucleus (SCN), the amygdala, the cortex, and the hippocampus but not in the striatum nor in the cerebellum. In the SCN, phosphorylation of Ser-128 and Ser-119 are stimulated by light exposure and submitted to circadian oscillations. In the retina, only phosphorylation of Ser-119 can be detected upon light exposure. Phosphorylation of both Ser-119 and Ser-128 in the SCN regulates the activity of CREB and participates in circadian rhythm generation. Phosphorylated upon calcium influx by CaMK4 and CaMK2 on Ser-119. CaMK4 is much more potent than CAMK2 in activating CREB. Phosphorylated by CaMK2 on Ser-128. Phosphorylation of Ser-128 blocks CREB-mediated transcription even when Ser-119 is phosphorylated. Phosphorylated by CaMK1. Phosphorylation of Ser-271 by HIPK2 in response to genotoxic stress promotes CREB1 activity, facilitating the recruitment of the coactivator CBP. Phosphorylated at Ser-119 by RPS6KA3, RPS6KA4 and RPS6KA5 in response to mitogenic or stress stimuli. CREBL2 positively regulates phosphorylation at Ser-119 thereby stimulating CREB1 transcriptional activity. In liver, phosphorylation is induced by fasting or glucagon in a circadian fashion. Phosphorylated by TSSK4 on Ser-119. In terms of processing, sumoylated with SUMO1. Sumoylation on Lys-290, but not on Lys-271, is required for nuclear localization of this protein. Sumoylation is enhanced under hypoxia, promoting nuclear localization and stabilization. Expressed in the heart (at protein level).

It localises to the nucleus. Functionally, phosphorylation-dependent transcription factor that stimulates transcription upon binding to the DNA cAMP response element (CRE), a sequence present in many viral and cellular promoters. Transcription activation is enhanced by the TORC coactivators which act independently of Ser-119 phosphorylation. Involved in different cellular processes including the synchronization of circadian rhythmicity and the differentiation of adipose cells. Regulates the expression of apoptotic and inflammatory response factors in cardiomyocytes in response to ERFE-mediated activation of AKT signaling. The sequence is that of Cyclic AMP-responsive element-binding protein 1 (Creb1) from Mus musculus (Mouse).